The sequence spans 289 residues: Protease HtpX homolog (289 aa).

Transmembrane regions (helical) follow at residues 9–29 and 31–51; these read TGVL…LIGG and GGMI…YWFS. H133 lines the Zn(2+) pocket. E134 is an active-site residue. Residue H137 participates in Zn(2+) binding. A run of 2 helical transmembrane segments spans residues 143 to 163 and 182 to 202; these read TLIQ…VDFA and IGLI…QLAI. E207 serves as a coordination point for Zn(2+).

Belongs to the peptidase M48B family. Zn(2+) serves as cofactor.

It is found in the cell membrane. The chain is Protease HtpX homolog from Pyrococcus abyssi (strain GE5 / Orsay).